Reading from the N-terminus, the 390-residue chain is GTPase Obg (390 aa).

In terms of domain architecture, Obg spans 1–159; the sequence is MKFVDEAAIL…RELMLELLLL (159 aa). An OBG-type G domain is found at 160–333; that stretch reads ADVGMLGLPN…LCWDVMSFLN (174 aa). Residues 166-173, 191-195, 213-216, 283-286, and 314-316 contribute to the GTP site; these read GLPNAGKS, FTTLI, DIPG, NKID, and SAA. Residues serine 173 and threonine 193 each coordinate Mg(2+). A compositionally biased stretch (acidic residues) spans 364–384; sequence VEAEAEDDWDDDWDEEDDDGV. The interval 364–390 is disordered; that stretch reads VEAEAEDDWDDDWDEEDDDGVEIIYER.

It belongs to the TRAFAC class OBG-HflX-like GTPase superfamily. OBG GTPase family. As to quaternary structure, monomer. The cofactor is Mg(2+).

It is found in the cytoplasm. Functionally, an essential GTPase which binds GTP, GDP and possibly (p)ppGpp with moderate affinity, with high nucleotide exchange rates and a fairly low GTP hydrolysis rate. Plays a role in control of the cell cycle, stress response, ribosome biogenesis and in those bacteria that undergo differentiation, in morphogenesis control. The protein is GTPase Obg of Yersinia pestis.